The chain runs to 301 residues: Small ribosomal subunit protein uS2 (301 aa).

It belongs to the universal ribosomal protein uS2 family. As to quaternary structure, component of the small ribosomal subunit. Mature ribosomes consist of a small (40S) and a large (60S) subunit. The 40S subunit contains about 33 different proteins and 1 molecule of RNA (18S). The 60S subunit contains about 49 different proteins and 3 molecules of RNA (25S, 5.8S and 5S). Interacts with RPS21.

The protein resides in the cytoplasm. In terms of biological role, required for the assembly and/or stability of the 40S ribosomal subunit. Required for the processing of the 20S rRNA-precursor to mature 18S rRNA in a late step of the maturation of 40S ribosomal subunits. This chain is Small ribosomal subunit protein uS2, found in Ajellomyces dermatitidis (strain ER-3 / ATCC MYA-2586) (Blastomyces dermatitidis).